We begin with the raw amino-acid sequence, 149 residues long: 3-dehydroquinate dehydratase (149 aa).

Catalysis depends on tyrosine 24, which acts as the Proton acceptor. Substrate is bound by residues asparagine 76, histidine 82, and aspartate 89. The active-site Proton donor is histidine 102. Residues 103–104 (LS) and arginine 113 contribute to the substrate site.

This sequence belongs to the type-II 3-dehydroquinase family. Homododecamer.

The catalysed reaction is 3-dehydroquinate = 3-dehydroshikimate + H2O. It functions in the pathway metabolic intermediate biosynthesis; chorismate biosynthesis; chorismate from D-erythrose 4-phosphate and phosphoenolpyruvate: step 3/7. In terms of biological role, catalyzes a trans-dehydration via an enolate intermediate. This chain is 3-dehydroquinate dehydratase, found in Acinetobacter baylyi (strain ATCC 33305 / BD413 / ADP1).